The primary structure comprises 219 residues: Sugar transporter SWEET1 (219 aa).

Helical transmembrane passes span Phe-3–Leu-23, Val-38–Leu-58, Gly-63–Tyr-83, Leu-98–Gly-118, Leu-125–Leu-145, Leu-156–Leu-176, and Pro-189–Pro-209. Residues Gln-5 to Lys-90 enclose the MtN3/slv 1 domain. Positions Gln-124–Phe-204 constitute a MtN3/slv 2 domain.

It belongs to the SWEET sugar transporter family.

The protein resides in the golgi apparatus membrane. The protein localises to the cell membrane. Mediates sugar transport across membranes. The polypeptide is Sugar transporter SWEET1 (slc50a1) (Danio rerio (Zebrafish)).